Consider the following 213-residue polypeptide: Large ribosomal subunit protein uL1 (213 aa).

The protein belongs to the universal ribosomal protein uL1 family.

The chain is Large ribosomal subunit protein uL1 (RPL10A) from Chlamydomonas reinhardtii (Chlamydomonas smithii).